The sequence spans 337 residues: Glycerol-3-phosphate dehydrogenase [NAD(P)+] (337 aa).

Trp12 and Lys107 together coordinate NADPH. Residues Lys107, Gly138, and Thr140 each coordinate sn-glycerol 3-phosphate. An NADPH-binding site is contributed by Ala142. Sn-glycerol 3-phosphate contacts are provided by Lys193, Asp246, Ser256, Arg257, and Asn258. Lys193 acts as the Proton acceptor in catalysis. Residue Arg257 coordinates NADPH. NADPH is bound by residues Val282 and Glu284.

This sequence belongs to the NAD-dependent glycerol-3-phosphate dehydrogenase family.

The protein resides in the cytoplasm. The enzyme catalyses sn-glycerol 3-phosphate + NAD(+) = dihydroxyacetone phosphate + NADH + H(+). The catalysed reaction is sn-glycerol 3-phosphate + NADP(+) = dihydroxyacetone phosphate + NADPH + H(+). The protein operates within membrane lipid metabolism; glycerophospholipid metabolism. Functionally, catalyzes the reduction of the glycolytic intermediate dihydroxyacetone phosphate (DHAP) to sn-glycerol 3-phosphate (G3P), the key precursor for phospholipid synthesis. The chain is Glycerol-3-phosphate dehydrogenase [NAD(P)+] from Koribacter versatilis (strain Ellin345).